A 299-amino-acid polypeptide reads, in one-letter code: uncharacterized protein (299 aa).

Residues 25–45 (LLYFFKSLAMILFFIFFSLTS) form a helical membrane-spanning segment.

Its subcellular location is the membrane. This is an uncharacterized protein from Rickettsia prowazekii (strain Madrid E).